The sequence spans 290 residues: MLKTIQDKARHRTRPLWAWLKLLWQRIDEDNMTTLAGNLAYVSLLSLVPLVAVVFALFAAFPMFSDVSIQLRHFIFANFLPATGDVIQRYIEQFVANSNKMTAVGACGLIVTALLLMYSIDSALNTIWRSKRARPKIYSFAVYWMILTLGPLLAGASLAISSYLFSLRWASDLNTVIDNVLRIFPLLLSWISFWLLYSIVPTIRVPNRDAIVGAFVAALLFEAGKKGFALYITMFPSYQLIYGVLAVIPILFVWVYWTWCIVLLGAEITVTLGEYRKLKQAAEQEEDDEP.

6 consecutive transmembrane segments (helical) span residues 44–64 (LLSLVPLVAVVFALFAAFPMF), 104–124 (VGACGLIVTALLLMYSIDSAL), 140–160 (FAVYWMILTLGPLLAGASLAI), 183–203 (IFPLLLSWISFWLLYSIVPTI), 210–230 (AIVGAFVAALLFEAGKKGFAL), and 244–264 (VLAVIPILFVWVYWTWCIVLL).

Belongs to the UPF0761 family.

Its subcellular location is the cell inner membrane. This chain is UPF0761 membrane protein YihY, found in Shigella sonnei (strain Ss046).